The primary structure comprises 189 residues: Elongation factor P (189 aa).

The protein belongs to the elongation factor P family.

The protein resides in the cytoplasm. It participates in protein biosynthesis; polypeptide chain elongation. In terms of biological role, involved in peptide bond synthesis. Stimulates efficient translation and peptide-bond synthesis on native or reconstituted 70S ribosomes in vitro. Probably functions indirectly by altering the affinity of the ribosome for aminoacyl-tRNA, thus increasing their reactivity as acceptors for peptidyl transferase. The sequence is that of Elongation factor P from Rhizobium rhizogenes (strain K84 / ATCC BAA-868) (Agrobacterium radiobacter).